The primary structure comprises 142 residues: Large ribosomal subunit protein bL17 (142 aa).

It belongs to the bacterial ribosomal protein bL17 family. In terms of assembly, part of the 50S ribosomal subunit. Contacts protein L32.

The protein is Large ribosomal subunit protein bL17 of Rickettsia bellii (strain OSU 85-389).